The primary structure comprises 1000 residues: Probable coatomer subunit beta' (1000 aa).

WD repeat units follow at residues 13–52 (ARSD…LVKS), 55–94 (VCDV…RVHQ), 97–136 (AHSD…AMKQ), 140–180 (GHTH…PNFT), 183–224 (GHEK…CVQT), 227–266 (GHAQ…LETT), and 351–391 (LGSS…NKDF). Residues 863 to 1000 (PRQTETQLKA…MDDLNLDEED (138 aa)) are disordered. The segment covering 901–915 (EPEEEEEQEEFDDDQ) has biased composition (acidic residues). Residues 960 to 969 (SASSQQSAQD) show a composition bias toward low complexity. The span at 970–1000 (FQDDTQWSDEDFGDAENGDLNMDDLNLDEED) shows a compositional bias: acidic residues.

It belongs to the WD repeat COPB2 family. Oligomeric complex that consists of at least the alpha, beta, beta', gamma, delta, epsilon and zeta subunits.

The protein localises to the cytoplasm. Its subcellular location is the golgi apparatus membrane. It localises to the cytoplasmic vesicle. It is found in the COPI-coated vesicle membrane. The coatomer is a cytosolic protein complex that binds to dilysine motifs and reversibly associates with Golgi non-clathrin-coated vesicles, which further mediate biosynthetic protein transport from the ER, via the Golgi up to the trans Golgi network. Coatomer complex is required for budding from Golgi membranes, and is essential for the retrograde Golgi-to-ER transport of dilysine-tagged proteins. The chain is Probable coatomer subunit beta' (copb-2) from Caenorhabditis elegans.